We begin with the raw amino-acid sequence, 273 residues long: Terpene cyclase ascF (273 aa).

A run of 7 helical transmembrane segments spans residues 18 to 38 (VYEATFQFGGVAWTLCYILIA), 49 to 69 (MPLFALANNFAWEMVYALWVV), 78 to 98 (MTIWMLIDTPIIYSILKHGVL), 113 to 133 (ILVGLIALCAAAHWSWQSWWI), 153 to 173 (YWAVSMCQFLVSTMSLAMLCV), 178 to 198 (GGVSWMIWLSRFLGTLIGLNM), and 217 to 237 (APAVFVWGVTTVCDIIYGFVL).

It belongs to the paxB family.

It localises to the membrane. It catalyses the reaction ilicicolin A epoxide = ilicicolin C. The protein operates within secondary metabolite biosynthesis; terpenoid biosynthesis. Terpene cyclase; part of the asc-1 gene cluster that mediates the biosynthesis of both ascochlorin and ascofuranone, a strong inhibitor of cyanide-insensitive alternative oxidases and a promising drug candidate against African trypanosomiasis. The first step in the pathway is performed by the non-reducing polyketide synthase ascC that produces orsellinic acid by condensing acetyl-CoA with 3 malonyl-CoA units. Orsellinic acid is then prenylated by the prenyltransferase ascA to yield ilicicolinic acid B. Ilicicolinic acid B is further reduced to ilicicolin B by the reductase ascB. The halogenase ascD then chlorinates ilicicolin B to produce ilicicolin A which is converted to ilicicolin A epoxide by the cytochrome P450 monooxygenase ascE that catalyzes stereoselective epoxidation of the terminal double bond of the prenyl group. Ilicicolin A epoxide is the last common precursor for the biosynthesis of ascofuranone and ascochlorin. The terpene cyclase ascF produces a monocyclic terpene, and the cyclization reaction is proposed to be initiated by protonation of the terminal epoxide of ilicicolin A epoxide to generate a monocyclic tertiarycation, which is followed by a series of hydride and methyl shifts with abstraction of proton, leading to the formation of the (14S,15R,19R)-trimethylcyclohexanone ring structure of ilicicolin C, which is finally reduced to ascochlorin by the dehydrogenase ascG. On the other hand, ilicicolin A epoxide is hydroxylated by the cytochrome P450 monooxygenase ascH, and the resultant product is cyclized by the terpene cyclase ascI to ascofuranol via protonation-initiated epoxide ring opening, which facilitates the 6-endo-tet cyclization to form the tetrahy-drofuran ring. Finally, ascofuranol is oxidized into ascofuranone by ascJ. The protein is Terpene cyclase ascF of Acremonium egyptiacum (Oospora egyptiaca).